Consider the following 101-residue polypeptide: Urease subunit beta (101 aa).

This sequence belongs to the urease beta subunit family. Heterotrimer of UreA (gamma), UreB (beta) and UreC (alpha) subunits. Three heterotrimers associate to form the active enzyme.

It is found in the cytoplasm. It catalyses the reaction urea + 2 H2O + H(+) = hydrogencarbonate + 2 NH4(+). It functions in the pathway nitrogen metabolism; urea degradation; CO(2) and NH(3) from urea (urease route): step 1/1. This is Urease subunit beta from Variovorax paradoxus (strain S110).